Consider the following 184-residue polypeptide: Large ribosomal subunit protein uL5 (184 aa).

This sequence belongs to the universal ribosomal protein uL5 family. Part of the 50S ribosomal subunit; part of the 5S rRNA/L5/L18/L25 subcomplex. Contacts the 5S rRNA and the P site tRNA. Forms a bridge to the 30S subunit in the 70S ribosome.

Functionally, this is one of the proteins that bind and probably mediate the attachment of the 5S RNA into the large ribosomal subunit, where it forms part of the central protuberance. In the 70S ribosome it contacts protein S13 of the 30S subunit (bridge B1b), connecting the 2 subunits; this bridge is implicated in subunit movement. Contacts the P site tRNA; the 5S rRNA and some of its associated proteins might help stabilize positioning of ribosome-bound tRNAs. The chain is Large ribosomal subunit protein uL5 from Wolinella succinogenes (strain ATCC 29543 / DSM 1740 / CCUG 13145 / JCM 31913 / LMG 7466 / NCTC 11488 / FDC 602W) (Vibrio succinogenes).